A 483-amino-acid polypeptide reads, in one-letter code: tRNA-2-methylthio-N(6)-dimethylallyladenosine synthase (483 aa).

The MTTase N-terminal domain maps to 31–148 (KKLYIETQGC…LPQMLDQHQD (118 aa)). Residues Cys40, Cys77, Cys111, Cys192, Cys196, and Cys199 each contribute to the [4Fe-4S] cluster site. The 233-residue stretch at 178-410 (RVEGFKAFVS…QHWIKQSSIR (233 aa)) folds into the Radical SAM core domain. Positions 413 to 477 (DAMQGTIQRV…LNLVYGELLN (65 aa)) constitute a TRAM domain.

The protein belongs to the methylthiotransferase family. MiaB subfamily. In terms of assembly, monomer. It depends on [4Fe-4S] cluster as a cofactor.

The protein localises to the cytoplasm. It catalyses the reaction N(6)-dimethylallyladenosine(37) in tRNA + (sulfur carrier)-SH + AH2 + 2 S-adenosyl-L-methionine = 2-methylsulfanyl-N(6)-dimethylallyladenosine(37) in tRNA + (sulfur carrier)-H + 5'-deoxyadenosine + L-methionine + A + S-adenosyl-L-homocysteine + 2 H(+). In terms of biological role, catalyzes the methylthiolation of N6-(dimethylallyl)adenosine (i(6)A), leading to the formation of 2-methylthio-N6-(dimethylallyl)adenosine (ms(2)i(6)A) at position 37 in tRNAs that read codons beginning with uridine. The protein is tRNA-2-methylthio-N(6)-dimethylallyladenosine synthase of Acinetobacter baylyi (strain ATCC 33305 / BD413 / ADP1).